A 136-amino-acid polypeptide reads, in one-letter code: Holo-[acyl-carrier-protein] synthase (136 aa).

Mg(2+) contacts are provided by Asp8 and Glu57.

It belongs to the P-Pant transferase superfamily. AcpS family. Requires Mg(2+) as cofactor.

Its subcellular location is the cytoplasm. It carries out the reaction apo-[ACP] + CoA = holo-[ACP] + adenosine 3',5'-bisphosphate + H(+). Its function is as follows. Transfers the 4'-phosphopantetheine moiety from coenzyme A to a Ser of acyl-carrier-protein. This chain is Holo-[acyl-carrier-protein] synthase, found in Azorhizobium caulinodans (strain ATCC 43989 / DSM 5975 / JCM 20966 / LMG 6465 / NBRC 14845 / NCIMB 13405 / ORS 571).